A 327-amino-acid chain; its full sequence is Probable cell division protein WhiA (327 aa).

The segment at residues 275 to 308 (SLEELGRLADPVMTKDAVAGRIRRLLSMADRKAK) is a DNA-binding region (H-T-H motif). The segment at 307–327 (AKTEGIPDTESAVTPELLEEA) is disordered.

This sequence belongs to the WhiA family.

Its function is as follows. Involved in cell division and chromosome segregation. The protein is Probable cell division protein WhiA of Mycobacteroides abscessus (strain ATCC 19977 / DSM 44196 / CCUG 20993 / CIP 104536 / JCM 13569 / NCTC 13031 / TMC 1543 / L948) (Mycobacterium abscessus).